The following is a 317-amino-acid chain: Melanocyte-stimulating hormone receptor (317 aa).

The Extracellular portion of the chain corresponds to 1-37 (MPAQGSQRSXLGSLNSTLMATPSLGLAANQSGPQCLE). N-linked (GlcNAc...) asparagine glycans are attached at residues asparagine 15 and asparagine 29. The chain crosses the membrane as a helical span at residues 38–63 (VSVPDGLFLCLGLVSLVENMLVVAAI). Residues 64–72 (AKNRNLHSP) are Cytoplasmic-facing. A helical transmembrane segment spans residues 73–93 (MYCFICCLALSDLLVSISNVL). At 94-118 (ETAVMLLLEAGALAVGATVVQQLDN) the chain is on the extracellular side. Residues 119-140 (VIDVLICSSMVSSLCFLGAIAM) form a helical membrane-spanning segment. At 141 to 163 (DRYISIFYALRYHSIVTLSRAQW) the chain is on the cytoplasmic side. The helical transmembrane segment at 164-183 (ATAAVWAASILSSTLFIAYY) threads the bilayer. The Extracellular segment spans residues 184–191 (DRTVVLLC). A helical membrane pass occupies residues 192-211 (LVVFFLAMLVLMAVLYAHML). Topologically, residues 212-240 (TQACQHVQGITRLHKRQHLVQQGFGLKGA) are cytoplasmic. A helical transmembrane segment spans residues 241-266 (ATLTILLGVFLLCWGPFFLHLTLIAV). The Extracellular segment spans residues 267 to 279 (CPQHPTCSCVFKN). The chain crosses the membrane as a helical span at residues 280-300 (FKLFLALIICNAIVDPLIYAF). Residues 301–317 (RSQELRKTLKEVLLFSW) lie on the Cytoplasmic side of the membrane.

It belongs to the G-protein coupled receptor 1 family. Interacts with MGRN1, but does not undergo MGRN1-mediated ubiquitination; this interaction competes with GNAS-binding and thus inhibits agonist-induced cAMP production. Interacts with OPN3; the interaction results in a decrease in MC1R-mediated cAMP signaling and ultimately a decrease in melanin production in melanocytes.

Its subcellular location is the cell membrane. In terms of biological role, receptor for MSH (alpha, beta and gamma) and ACTH. The activity of this receptor is mediated by G proteins which activate adenylate cyclase. Mediates melanogenesis, the production of eumelanin (black/brown) and phaeomelanin (red/yellow), via regulation of cAMP signaling in melanocytes. The sequence is that of Melanocyte-stimulating hormone receptor (MC1R) from Galago senegalensis (Northern lesser bushbaby).